The following is a 445-amino-acid chain: Glutamyl-tRNA(Gln) amidotransferase subunit D (445 aa).

The Asparaginase/glutaminase domain occupies 93–425 (SEIKIISTGG…EKIRSLMISN (333 aa)). Residues Thr103, Thr179, Asp180, and Lys258 contribute to the active site.

It belongs to the asparaginase 1 family. GatD subfamily. As to quaternary structure, heterodimer of GatD and GatE.

It carries out the reaction L-glutamyl-tRNA(Gln) + L-glutamine + ATP + H2O = L-glutaminyl-tRNA(Gln) + L-glutamate + ADP + phosphate + H(+). In terms of biological role, allows the formation of correctly charged Gln-tRNA(Gln) through the transamidation of misacylated Glu-tRNA(Gln) in organisms which lack glutaminyl-tRNA synthetase. The reaction takes place in the presence of glutamine and ATP through an activated gamma-phospho-Glu-tRNA(Gln). The GatDE system is specific for glutamate and does not act on aspartate. This Saccharolobus islandicus (strain L.S.2.15 / Lassen #1) (Sulfolobus islandicus) protein is Glutamyl-tRNA(Gln) amidotransferase subunit D.